We begin with the raw amino-acid sequence, 345 residues long: Matrix protein (345 aa).

Positions 148–185 (KKKSKAKSAEGPSASTEDIKDSDTKGNQDIGDNGDLNS) are disordered. Basic and acidic residues predominate over residues 164–173 (EDIKDSDTKG).

The protein resides in the virion. The protein is Matrix protein (M2) of Aphis (Hairy beggarticks).